The sequence spans 452 residues: Probable receptor-like protein kinase At5g20050 (452 aa).

The N-terminal stretch at 1–23 (MEDKKANIIATILILALVVVIIA) is a signal peptide. Residues 24 to 33 (ARVSLKLSKT) are Extracellular-facing. A helical membrane pass occupies residues 34–54 (FYLIAGVDISLILAVICFLII). The Cytoplasmic portion of the chain corresponds to 55–452 (RSRYNKERKL…SSIISPISPR (398 aa)). A Protein kinase domain is found at 103-392 (DGFRSLIGKG…MVIEMLEGRV (290 aa)). Residues 109–117 (IGKGGSGSV) and Lys-131 each bind ATP. Tyr-178 is subject to Phosphotyrosine. Asp-236 (proton acceptor) is an active-site residue. Residues Thr-270 and Thr-275 each carry the phosphothreonine modification.

This sequence belongs to the protein kinase superfamily. Ser/Thr protein kinase family.

The protein localises to the membrane. It carries out the reaction L-seryl-[protein] + ATP = O-phospho-L-seryl-[protein] + ADP + H(+). The enzyme catalyses L-threonyl-[protein] + ATP = O-phospho-L-threonyl-[protein] + ADP + H(+). The protein is Probable receptor-like protein kinase At5g20050 of Arabidopsis thaliana (Mouse-ear cress).